We begin with the raw amino-acid sequence, 337 residues long: tRNA N6-adenosine threonylcarbamoyltransferase (337 aa).

Residues histidine 111 and histidine 115 each contribute to the Fe cation site. Residues 134-138 (LVSGG), aspartate 167, glycine 180, and asparagine 272 each bind substrate. Aspartate 300 is a binding site for Fe cation.

Belongs to the KAE1 / TsaD family. The cofactor is Fe(2+).

Its subcellular location is the cytoplasm. It catalyses the reaction L-threonylcarbamoyladenylate + adenosine(37) in tRNA = N(6)-L-threonylcarbamoyladenosine(37) in tRNA + AMP + H(+). Its function is as follows. Required for the formation of a threonylcarbamoyl group on adenosine at position 37 (t(6)A37) in tRNAs that read codons beginning with adenine. Is involved in the transfer of the threonylcarbamoyl moiety of threonylcarbamoyl-AMP (TC-AMP) to the N6 group of A37, together with TsaE and TsaB. TsaD likely plays a direct catalytic role in this reaction. This is tRNA N6-adenosine threonylcarbamoyltransferase from Shewanella woodyi (strain ATCC 51908 / MS32).